The chain runs to 264 residues: Low molecular mass lipoprotein PBMHPC-23 (264 aa).

Positions 1 to 23 are cleaved as a signal peptide; it reads MKFLVVFAVVRACVTPACAEMSA.

This sequence belongs to the 30 kDa lipoprotein family.

The protein resides in the secreted. The protein is Low molecular mass lipoprotein PBMHPC-23 of Bombyx mori (Silk moth).